The primary structure comprises 142 residues: Baculoviral IAP repeat-containing protein 5 (142 aa).

Residues 18-88 (RVSTFKNWPF…KHSSGCAFLS (71 aa)) form a BIR repeat. Phosphoserine; by AURKC is present on S20. K23 carries the N6-acetyllysine modification. Residue T34 is modified to Phosphothreonine; by CDK1 and CDK15. T48 carries the phosphothreonine modification. Positions 57, 60, 77, and 84 each coordinate Zn(2+). Residues K90, K110, K112, and K115 each carry the N6-acetyllysine modification. Position 117 is a phosphothreonine; by AURKB (T117). N6-acetyllysine is present on K129.

This sequence belongs to the IAP family. Monomer or homodimer. Exists as a homodimer in the apo state and as a monomer in the CPC-bound state. The monomer protects cells against apoptosis more efficiently than the dimer. Only the dimeric form is capable of enhancing tubulin stability in cells. When phosphorylated, interacts with LAMTOR5/HBXIP; the resulting complex binds pro-CASP9, as well as active CASP9, but much less efficiently. Component of the chromosomal passenger complex (CPC) composed of at least BIRC5/survivin, CDCA8/borealin, INCENP, AURKB or AURKC; in the complex forms a triple-helix bundle-based subcomplex with INCENP and CDCA8. Interacts with JTB. Interacts (via BIR domain) with histone H3 phosphorylated at 'Thr-3' (H3pT3). Interacts with EVI5. Interacts with GTP-bound RAN in both the S and M phases of the cell cycle. Interacts with USP9X. Interacts with tubulin. Interacts with BIRC2/c-IAP1. The acetylated form at Lys-129 interacts with STAT3. The monomeric form deacetylated at Lys-129 interacts with XPO1/CRM1. The monomeric form interacts with XIAP/BIRC4. Both the dimeric and monomeric form can interact with DIABLO/SMAC. Interacts with BIRC6/bruce. Interacts with FBXL7; this interaction facilitates the polyubiquitination and subsequent proteasomal degradation of BIRC5 by the SCF(FBXL7) E3 ubiquitin-protein ligase complex. Ubiquitinated by the Cul9-RING ubiquitin-protein ligase complex, leading to its degradation. Ubiquitination is required for centrosomal targeting. Deubiquitinated by USP35 or USP38; leading to stabilization. In terms of processing, acetylation at Lys-129 results in its homodimerization, while deacetylation promotes the formation of monomers which heterodimerize with XPO1/CRM1 which facilitates its nuclear export. The acetylated form represses STAT3 transactivation. The dynamic equilibrium between its acetylation and deacetylation at Lys-129 determines its interaction with XPO1/CRM1, its subsequent subcellular localization, and its ability to inhibit STAT3 transactivation. Post-translationally, in vitro phosphorylation at Thr-117 by AURKB prevents interaction with INCENP and localization to mitotic chromosomes. Phosphorylation at Thr-48 by CK2 is critical for its mitotic and anti-apoptotic activities. Phosphorylation at Thr-34 by CDK15 is critical for its anti-apoptotic activity. Phosphorylation at Ser-20 by AURKC is critical for regulation of proper chromosome alignment and segregation, and possibly cytokinesis.

The protein localises to the cytoplasm. It localises to the nucleus. It is found in the chromosome. Its subcellular location is the centromere. The protein resides in the cytoskeleton. The protein localises to the spindle. It localises to the kinetochore. It is found in the midbody. Its function is as follows. Multitasking protein that has dual roles in promoting cell proliferation and preventing apoptosis. Component of a chromosome passage protein complex (CPC) which is essential for chromosome alignment and segregation during mitosis and cytokinesis. Acts as an important regulator of the localization of this complex; directs CPC movement to different locations from the inner centromere during prometaphase to midbody during cytokinesis and participates in the organization of the center spindle by associating with polymerized microtubules. Involved in the recruitment of CPC to centromeres during early mitosis via association with histone H3 phosphorylated at 'Thr-3' (H3pT3) during mitosis. The complex with RAN plays a role in mitotic spindle formation by serving as a physical scaffold to help deliver the RAN effector molecule TPX2 to microtubules. May counteract a default induction of apoptosis in G2/M phase. The acetylated form represses STAT3 transactivation of target gene promoters. May play a role in neoplasia. Inhibitor of CASP3 and CASP7. Essential for the maintenance of mitochondrial integrity and function. This is Baculoviral IAP repeat-containing protein 5 (BIRC5) from Canis lupus familiaris (Dog).